The sequence spans 146 residues: Acidic phospholipase A2 2 (146 aa).

Residues 1–21 (MNPAHLLILAAVCVSSLGASS) form the signal peptide. Residues 22–27 (NRPMPL) constitute a propeptide that is removed on maturation. Intrachain disulfides connect C38–C98, C53–C145, C55–C71, C70–C126, C77–C119, C87–C112, and C105–C117. Ca(2+) is bound by residues Y54, G56, and G58. H74 is a catalytic residue. Ca(2+) is bound at residue D75. The active site involves D120.

It belongs to the phospholipase A2 family. Group I subfamily. D49 sub-subfamily. Ca(2+) serves as cofactor. As to expression, expressed by the venom gland.

Its subcellular location is the secreted. The enzyme catalyses a 1,2-diacyl-sn-glycero-3-phosphocholine + H2O = a 1-acyl-sn-glycero-3-phosphocholine + a fatty acid + H(+). Functionally, PLA2 catalyzes the calcium-dependent hydrolysis of the 2-acyl groups in 3-sn-phosphoglycerides. The sequence is that of Acidic phospholipase A2 2 from Naja kaouthia (Monocled cobra).